The chain runs to 108 residues: Tyrosine-protein phosphatase 5 (108 aa).

The Tyrosine-protein phosphatase domain occupies 1–108; the sequence is QESTVIVMLT…QGNNPSPIIV (108 aa). Substrate is bound at residue aspartate 78.

It belongs to the protein-tyrosine phosphatase family.

It carries out the reaction O-phospho-L-tyrosyl-[protein] + H2O = L-tyrosyl-[protein] + phosphate. This is Tyrosine-protein phosphatase 5 (STY-5) from Styela plicata (Wrinkled sea squirt).